Here is a 230-residue protein sequence, read N- to C-terminus: Ribosomal RNA large subunit methyltransferase E (230 aa).

Positions 1–13 (MSGSGGKGGGRGG) are enriched in gly residues. A disordered region spans residues 1–22 (MSGSGGKGGGRGGLHVRVKTAK). 5 residues coordinate S-adenosyl-L-methionine: glycine 81, tryptophan 83, aspartate 100, aspartate 116, and aspartate 140. The Proton acceptor role is filled by lysine 180.

The protein belongs to the class I-like SAM-binding methyltransferase superfamily. RNA methyltransferase RlmE family.

It localises to the cytoplasm. It carries out the reaction uridine(2552) in 23S rRNA + S-adenosyl-L-methionine = 2'-O-methyluridine(2552) in 23S rRNA + S-adenosyl-L-homocysteine + H(+). Specifically methylates the uridine in position 2552 of 23S rRNA at the 2'-O position of the ribose in the fully assembled 50S ribosomal subunit. In Sphingopyxis alaskensis (strain DSM 13593 / LMG 18877 / RB2256) (Sphingomonas alaskensis), this protein is Ribosomal RNA large subunit methyltransferase E.